The following is a 254-amino-acid chain: MAIDSKPHDDLQLFKTNLHPCGYWPDRWASDLVMDPNDPRLGAIYPQTLAWGFRRSGNLLYRPHCEHCNACVPVRVNVNAFVPNRSQRRCLARNATLVTRIVPAERNAEQLSLYRRYLHQRHPDGGMDGHGAIEFDQFLIGPWGYGRFMEIREPATNGTPGQLLAVAVTDLIHQALSAVYTFYEPNAAARGLGTLAILHQIHWAQREQRPYLYLGYWIKDHFKMDYKRRFQKLEIYDGYCWRPFSTTYPTTHTL.

This sequence belongs to the R-transferase family. Bpt subfamily.

The protein localises to the cytoplasm. It carries out the reaction N-terminal L-glutamyl-[protein] + L-leucyl-tRNA(Leu) = N-terminal L-leucyl-L-glutamyl-[protein] + tRNA(Leu) + H(+). It catalyses the reaction N-terminal L-aspartyl-[protein] + L-leucyl-tRNA(Leu) = N-terminal L-leucyl-L-aspartyl-[protein] + tRNA(Leu) + H(+). In terms of biological role, functions in the N-end rule pathway of protein degradation where it conjugates Leu from its aminoacyl-tRNA to the N-termini of proteins containing an N-terminal aspartate or glutamate. In Xylella fastidiosa (strain M12), this protein is Aspartate/glutamate leucyltransferase.